The sequence spans 584 residues: Transcription factor 7-like 1 (584 aa).

Positions 1 to 28 are enriched in gly residues; sequence MPQLGGGRGGAGGGGGGSGAGATSGGDD. Positions 1–71 are CTNNB1-binding; that stretch reads MPQLGGGRGG…VKSSLVNESE (71 aa). 3 disordered regions span residues 1 to 99, 159 to 179, and 194 to 231; these read MPQL…RDYF, ATVK…VPVV, and YSND…SPYY. The segment covering 64-78 has biased composition (low complexity); the sequence is SSLVNESENQSSSSD. Residues 80–99 are compositionally biased toward basic and acidic residues; that stretch reads EAERRPQPARDAFQKPRDYF. The segment at residues 342–410 is a DNA-binding region (HMG box); it reads VKKPLNAFML…LHAQLYPTWS (69 aa). Positions 412-501 are disordered; it reads RDNYGKKKKR…HSEQAQPLSL (90 aa). The Nuclear localization signal signature appears at 417–423; that stretch reads KKKKRKR. Low complexity-rich tracts occupy residues 427 to 437 and 470 to 491; these read LSQTQSQQQIQ and SALD…PAAT. The segment covering 492-501 has biased composition (polar residues); it reads HSEQAQPLSL.

The protein belongs to the TCF/LEF family. Binds the armadillo repeat of CTNNB1 and forms a stable complex. Interacts with DAZAP2. Detected in the basal layer of epidermis and in outer root sheath and bulge of hair follicles.

The protein localises to the nucleus. Its function is as follows. Participates in the Wnt signaling pathway. Binds to DNA and acts as a repressor in the absence of CTNNB1, and as an activator in its presence. Necessary for the terminal differentiation of epidermal cells, the formation of keratohyalin granules and the development of the barrier function of the epidermis. In Mus musculus (Mouse), this protein is Transcription factor 7-like 1 (Tcf7l1).